The sequence spans 350 residues: Guanine nucleotide-binding protein G(t) subunit alpha-1 (350 aa).

Residues 1 to 21 form a disordered region; that stretch reads MGAGASAEEKHSRELEKKLKE. Gly2 is lipidated: N-myristoyl glycine. Over residues 7-21 the composition is skewed to basic and acidic residues; it reads AEEKHSRELEKKLKE. Residues 28–350 form the G-alpha domain; the sequence is RTVKLLLLGA…KENLKDCGLF (323 aa). Residues 31–44 form a G1 motif region; sequence KLLLLGAGESGKST. 36-43 is a GTP binding site; the sequence is GAGESGKS. Ser43 is a binding site for Mg(2+). Residue Tyr142 is modified to Phosphotyrosine. GTP-binding positions include Asp146, 171–177, Gly199, 265–268, and Ala322; these read LRSRVKT and NKKD. The interval 169–177 is G2 motif; sequence DVLRSRVKT. Residue Thr177 participates in Mg(2+) binding. The G3 motif stretch occupies residues 192–201; it reads FRMFDVGGQR. Positions 261-268 are G4 motif; sequence VLFLNKKD. The G5 motif stretch occupies residues 320 to 325; it reads TCATDT. Residues 340–350 are interaction with RHO; it reads IKENLKDCGLF.

The protein belongs to the G-alpha family. G(i/o/t/z) subfamily. Heterotrimeric G proteins are composed of 3 subunits alpha, beta and gamma. The alpha chain contains the guanine nucleotide binding site. Interacts with RHO. Interacts with RGS9 and PDE6G. Interacts (when myristoylated) with UNC119; interaction is required for localization in sensory neurons. In the retina, expressed in the rod photoreceptors.

It localises to the cell projection. Its subcellular location is the cilium. The protein resides in the photoreceptor outer segment. It is found in the membrane. The protein localises to the photoreceptor inner segment. Its function is as follows. Functions as a signal transducer for the rod photoreceptor RHO. Required for normal RHO-mediated light perception by the retina. Guanine nucleotide-binding proteins (G proteins) function as transducers downstream of G protein-coupled receptors (GPCRs), such as the photoreceptor RHO. The alpha chain contains the guanine nucleotide binding site and alternates between an active, GTP-bound state and an inactive, GDP-bound state. Activated RHO promotes GDP release and GTP binding. Signaling is mediated via downstream effector proteins, such as cGMP-phosphodiesterase. This chain is Guanine nucleotide-binding protein G(t) subunit alpha-1 (Gnat1), found in Mus musculus (Mouse).